We begin with the raw amino-acid sequence, 791 residues long: Phenylalanine--tRNA ligase beta subunit (791 aa).

A tRNA-binding domain is found at 39–149 (GDEIQNVVTG…SDTAIGKDIK (111 aa)). Residues 403 to 478 (IKERNLKVDS…RIYGYNNIPT (76 aa)) enclose the B5 domain. Mg(2+) is bound by residues Asp-456, Asp-462, Glu-465, and Glu-466. Positions 698–791 (PKFPAVDRDM…LENNLGAELR (94 aa)) constitute an FDX-ACB domain.

Belongs to the phenylalanyl-tRNA synthetase beta subunit family. Type 1 subfamily. As to quaternary structure, tetramer of two alpha and two beta subunits. Mg(2+) serves as cofactor.

It localises to the cytoplasm. The enzyme catalyses tRNA(Phe) + L-phenylalanine + ATP = L-phenylalanyl-tRNA(Phe) + AMP + diphosphate + H(+). This Clostridium tetani (strain Massachusetts / E88) protein is Phenylalanine--tRNA ligase beta subunit.